Consider the following 360-residue polypeptide: Peptide chain release factor 1 (360 aa).

The residue at position 237 (Gln-237) is an N5-methylglutamine.

Belongs to the prokaryotic/mitochondrial release factor family. Post-translationally, methylated by PrmC. Methylation increases the termination efficiency of RF1.

The protein resides in the cytoplasm. Peptide chain release factor 1 directs the termination of translation in response to the peptide chain termination codons UAG and UAA. This chain is Peptide chain release factor 1, found in Pseudomonas fluorescens (strain ATCC BAA-477 / NRRL B-23932 / Pf-5).